Reading from the N-terminus, the 296-residue chain is MTPPENQNIIEERKELIKEVLSAYPEKAAKKREKHLSVYEEGKSDCGVKSNIKSLPGVMTARGCAYAGSKGVVWGPIKDMIHISHGPVGCGYWSWSGRRNYYIGTTGIDTFGTMHFTSDFQERDIVFGGDKKLVKLIQELDVLFPLNRGVSIQSECPIGLIGDDIEAVARKTSKEIGKPVVPVRCEGFRGVSQSLGHHIANDMVRDWVFTRSDQAKKDGTLKFEGTPYDVAIIGDYNIGGDAWASRILLEEIALRVVAQWSGDGTINEMLMTPNVKMNLIHCYRSMNYISRHMEEA.

[8Fe-7S] cluster-binding residues include Cys-64, Cys-90, and Cys-156. A [7Fe-Mo-9S-C-homocitryl] cluster-binding site is contributed by Cys-282.

This sequence belongs to the NifD/NifK/NifE/NifN family. Tetramer of two alpha and two beta chains. Forms complex with the iron protein (nitrogenase component 2). [8Fe-7S] cluster serves as cofactor. [7Fe-Mo-9S-C-homocitryl] cluster is required as a cofactor.

The catalysed reaction is N2 + 8 reduced [2Fe-2S]-[ferredoxin] + 16 ATP + 16 H2O = H2 + 8 oxidized [2Fe-2S]-[ferredoxin] + 2 NH4(+) + 16 ADP + 16 phosphate + 6 H(+). In terms of biological role, this molybdenum-iron protein is part of the nitrogenase complex that catalyzes the key enzymatic reactions in nitrogen fixation. This Nostoc commune protein is Nitrogenase molybdenum-iron protein alpha chain (nifD).